Here is a 116-residue protein sequence, read N- to C-terminus: MRHQLRIPLLSKPADQRKALLRGLTTQLIREGRVTTTKARAKALRNEAERMISLAKEGSLASRRRAIGYIYDKKLVHSLFEKAKERYGDRNGGYTRIVRTVSRKGDNAQMAIIELV.

This sequence belongs to the bacterial ribosomal protein bL17 family. As to quaternary structure, part of the 50S ribosomal subunit. Contacts protein L32.

This is Large ribosomal subunit protein bL17 from Prochlorococcus marinus (strain MIT 9301).